We begin with the raw amino-acid sequence, 898 residues long: Translation initiation factor IF-2 (898 aa).

Disordered regions lie at residues 51 to 70 (RKSH…LKRK) and 114 to 303 (LAAE…KQHG). 2 stretches are compositionally biased toward basic and acidic residues: residues 114-171 (LAAE…EKSK) and 184-258 (PAKE…DDKG). Residues 398–567 (HRAPVVTIMG…LLQSELLELQ (170 aa)) form the tr-type G domain. A G1 region spans residues 407 to 414 (GHVDHGKT). A GTP-binding site is contributed by 407–414 (GHVDHGKT). The tract at residues 432-436 (GITQH) is G2. Residues 453–456 (DTPG) form a G3 region. Residues 453–457 (DTPGH) and 507–510 (NKID) each bind GTP. The tract at residues 507–510 (NKID) is G4. Residues 543 to 545 (SAH) are G5.

It belongs to the TRAFAC class translation factor GTPase superfamily. Classic translation factor GTPase family. IF-2 subfamily.

It localises to the cytoplasm. In terms of biological role, one of the essential components for the initiation of protein synthesis. Protects formylmethionyl-tRNA from spontaneous hydrolysis and promotes its binding to the 30S ribosomal subunits. Also involved in the hydrolysis of GTP during the formation of the 70S ribosomal complex. The protein is Translation initiation factor IF-2 of Alcanivorax borkumensis (strain ATCC 700651 / DSM 11573 / NCIMB 13689 / SK2).